The sequence spans 113 residues: Protein CTLA-2-beta (113 aa).

2 tandem repeats follow at residues 15–17 (EWK) and 18–20 (EWK). Positions 15-20 (EWKEWK) are 2 X 3 AA tandem repeats of E-W-K.

The protein to the propeptide regions of cysteine proteases.

In terms of biological role, not known, expressed in activated T-cell. The chain is Protein CTLA-2-beta (Ctla2b) from Mus musculus (Mouse).